The primary structure comprises 651 residues: ATP-dependent zinc metalloprotease FtsH (651 aa).

Residues 1–134 (MIVFATILFG…FTTDPQTAGP (134 aa)) are Extracellular-facing. A helical transmembrane segment spans residues 135–155 (WARAIAVMAPFVLILLLFFLM). Topologically, residues 156-651 (TRTGRSASQS…PAMSVNGHRG (496 aa)) are cytoplasmic. Residue 229 to 236 (GPPGTGKT) participates in ATP binding. Position 451 (H451) interacts with Zn(2+). Residue E452 is part of the active site. The Zn(2+) site is built by H455 and D527.

In the central section; belongs to the AAA ATPase family. It in the C-terminal section; belongs to the peptidase M41 family. Homohexamer. The cofactor is Zn(2+).

The protein localises to the cell membrane. Acts as a processive, ATP-dependent zinc metallopeptidase for both cytoplasmic and membrane proteins. Plays a role in the quality control of integral membrane proteins. The chain is ATP-dependent zinc metalloprotease FtsH from Rubrobacter xylanophilus (strain DSM 9941 / JCM 11954 / NBRC 16129 / PRD-1).